Reading from the N-terminus, the 264-residue chain is MRPLLGLLLVFAGCTFALYLLSTRLPRGRRLGSTEEAGGRSLWFPSDLAELRELSEVLREYRKEHQAYVFLLFCGAYLYKQGFAIPGSSFLNVLAGALFGPWLGLLLCCVLTSVGATCCYLLSSIFGKQLVVSYFPDKVALLQRKVEENRNSLFFFLLFLRLFPMTPNWFLNLSAPILNIPIVQFFFSVLIGLIPYNFICVQTGSILSTLTSLDALFSWDTVFKLLAIAMVALIPGTLIKKFSQKHLQLNETSTANHIHSRKDT.

A signal peptide spans 1–17 (MRPLLGLLLVFAGCTFA). 5 consecutive transmembrane segments (helical) span residues 67-87 (AYVF…AIPG), 100-122 (GPWL…CYLL), 153-173 (LFFF…FLNL), 175-195 (APIL…GLIP), and 219-239 (WDTV…GTLI). The tract at residues 96–207 (GALFGPWLGL…FICVQTGSIL (112 aa)) is VTT domain. Asn250 is a glycosylation site (N-linked (GlcNAc...) asparagine).

It belongs to the TMEM41 family.

It is found in the membrane. The chain is Transmembrane protein 41A (TMEM41A) from Homo sapiens (Human).